The chain runs to 142 residues: Putative arsenate reductase (142 aa).

It belongs to the low molecular weight phosphotyrosine protein phosphatase family.

In terms of biological role, reduces arsenate [As(V)] to arsenite [As(III)]. This is Putative arsenate reductase (arsC) from Halobacterium salinarum (strain ATCC 700922 / JCM 11081 / NRC-1) (Halobacterium halobium).